The primary structure comprises 301 residues: 33 kDa chaperonin (301 aa).

Intrachain disulfides connect C244-C246 and C277-C280.

The protein belongs to the HSP33 family. In terms of processing, under oxidizing conditions two disulfide bonds are formed involving the reactive cysteines. Under reducing conditions zinc is bound to the reactive cysteines and the protein is inactive.

It is found in the cytoplasm. Functionally, redox regulated molecular chaperone. Protects both thermally unfolding and oxidatively damaged proteins from irreversible aggregation. Plays an important role in the bacterial defense system toward oxidative stress. The sequence is that of 33 kDa chaperonin from Geobacter sulfurreducens (strain ATCC 51573 / DSM 12127 / PCA).